Reading from the N-terminus, the 238-residue chain is Transmembrane protein 127 (238 aa).

Met1 is modified (N-acetylmethionine). A compositionally biased stretch (gly residues) spans 1–11 (MYAPGGAGLPG). Residues 1–27 (MYAPGGAGLPGGRRRRSPGSSALPKQP) are disordered. Ser17 is modified (phosphoserine). 3 consecutive transmembrane segments (helical) span residues 96–116 (IAAF…LDVF), 130–150 (AFAH…SYWA), and 169–189 (VYVT…ASIL).

Belongs to the TMEM127 family.

It is found in the cell membrane. The protein resides in the cytoplasm. Its function is as follows. Controls cell proliferation acting as a negative regulator of TOR signaling pathway mediated by mTORC1. May act as a tumor suppressor. The protein is Transmembrane protein 127 (Tmem127) of Mus musculus (Mouse).